Consider the following 95-residue polypeptide: HssA/B-like protein 45 (95 aa).

The segment at 1-31 (MTLFSSISSISNPMTSSKSSIASFGSGTSMS) is disordered.

It belongs to the hssA/B family.

This is HssA/B-like protein 45 (hssl45) from Dictyostelium discoideum (Social amoeba).